The primary structure comprises 2443 residues: Spatacsin (2443 aa).

At Ser1955 the chain carries Phosphoserine.

As to quaternary structure, interacts with AP5Z1, AP5B1, AP5S1 and ZFYVE26. As to expression, expressed in all structures of brain, with a high expression in cerebellum. Expressed in cortical projection neurons.

It localises to the cytoplasm. The protein resides in the cytosol. It is found in the nucleus. The protein localises to the cell projection. Its subcellular location is the axon. It localises to the dendrite. Functionally, may play a role in neurite plasticity by maintaining cytoskeleton stability and regulating synaptic vesicle transport. The polypeptide is Spatacsin (SPG11) (Homo sapiens (Human)).